Consider the following 633-residue polypeptide: tRNA uridine 5-carboxymethylaminomethyl modification enzyme MnmG (633 aa).

An FAD-binding site is contributed by 13 to 18 (GGGHAG). Residue 273-287 (GPRYCPSIEDKINRF) participates in NAD(+) binding.

Belongs to the MnmG family. Homodimer. Heterotetramer of two MnmE and two MnmG subunits. It depends on FAD as a cofactor.

Its subcellular location is the cytoplasm. Its function is as follows. NAD-binding protein involved in the addition of a carboxymethylaminomethyl (cmnm) group at the wobble position (U34) of certain tRNAs, forming tRNA-cmnm(5)s(2)U34. The protein is tRNA uridine 5-carboxymethylaminomethyl modification enzyme MnmG of Pseudoalteromonas atlantica (strain T6c / ATCC BAA-1087).